Reading from the N-terminus, the 80-residue chain is Small, acid-soluble spore protein Tlp (80 aa).

This sequence belongs to the Tlp family.

The protein resides in the spore core. This is Small, acid-soluble spore protein Tlp from Bacillus pumilus (strain SAFR-032).